The sequence spans 249 residues: Probable transcriptional regulatory protein Wbm0670 (249 aa).

The protein belongs to the TACO1 family.

It is found in the cytoplasm. The polypeptide is Probable transcriptional regulatory protein Wbm0670 (Wolbachia sp. subsp. Brugia malayi (strain TRS)).